The sequence spans 311 residues: Serpentine receptor class gamma-6 (311 aa).

Transmembrane regions (helical) follow at residues 24–44 (MGQLVYLIPSFILISKMIYVI), 58–78 (FWLLYTMDLALSLLNLFFDIF), 101–121 (PLLIDITYPLWFYFHVGKMVA), 148–168 (LTACVIMIIFVPFSIIWNILI), 200–220 (YMQISMAVTLLSNIVTGAILW), 235–255 (IWFAISTEYLLSACAFCYLHM), and 266–286 (IFMLVIFVWDGFNILSPVIMI).

This sequence belongs to the nematode receptor-like protein srg family.

It localises to the membrane. The chain is Serpentine receptor class gamma-6 (srg-6) from Caenorhabditis elegans.